Consider the following 89-residue polypeptide: Small ribosomal subunit protein uS17 (89 aa).

It belongs to the universal ribosomal protein uS17 family. In terms of assembly, part of the 30S ribosomal subunit.

Functionally, one of the primary rRNA binding proteins, it binds specifically to the 5'-end of 16S ribosomal RNA. This Chlorobium chlorochromatii (strain CaD3) protein is Small ribosomal subunit protein uS17.